A 309-amino-acid chain; its full sequence is Elongation factor Ts (309 aa).

The segment at Thr-82–Val-85 is involved in Mg(2+) ion dislocation from EF-Tu.

The protein belongs to the EF-Ts family.

It is found in the cytoplasm. In terms of biological role, associates with the EF-Tu.GDP complex and induces the exchange of GDP to GTP. It remains bound to the aminoacyl-tRNA.EF-Tu.GTP complex up to the GTP hydrolysis stage on the ribosome. In Rickettsia typhi (strain ATCC VR-144 / Wilmington), this protein is Elongation factor Ts.